The primary structure comprises 869 residues: MSNIKNNNDLSKKYDHKICEQQFSLWTTQKELNKKNLKANKNSYSILLPPPNVTGNLHLGHALNGTIQDCLIRFNNLKGLSAYWICGMDHAGIATQTKYEKYLRENKISNKDKSRDEKVADLFEWSQNVGNNIRNQWKNMGFFLDYENEHFTLEKKSNEMVNQVFVKMYNDGLIYRSKTLVNWDIKLQSAISNIEVIKKEVETNLYYIRYYLSNSKDYLLVATTRPETIFVDECLVVNPKDKRYKNYINKFAINPLTNKEIKIIADEYVDIQFGTGVMKCTPAHDFNDYELGKKYKLNIISCFNEDGTTNNYAVGFENLKIADARVKCVEYLEKNNLLEKVEKTISNVGFSERTNAVVEPMMSEQWFVKVSEYSKKVIELQKSSKKIQFFPIKFEKNLINWMTNLNDWCISRQLWWGHQIPVWYKKDSKEIYVGTKPPKNEELYVRDNDVLDTWFSSGLWPITTTDALKSKDALFPTNVLVTGFDIIFFWVFRMMFFSLYLKKEVPFKHCYITGLIRDEHNNKMSKSLGNGVDPNDVIEKYGADALRLFLLSSSSPGEDLCYVEEKVKSCWGFINKLWNSFRYVEMNSSDFNFDEDKTPKNLEDFDKWILNKFNKAYSEFLQQFNKYNFLVSIKKILDFTWDDFCNTYIELSKNRTSNQESKLWVLNYLIKKILILFHPMCPFVTSNLYDNFKFKTKDSILLERLDFKKISNLKESSIEDVLQIINKIRIFNFENKIPNNKVIDIHLEVLNPKLFKISDEVINILNTAKINIVKQDIKSLKPDYVENNYLIFILNKEDLLGSNNEANNIEKIKKEIEFVKSEISRCNGMLSNKSFIEKAPKEKIELEKSKKEKHEMKLKELEKLLSSHK.

The 'HIGH' region signature appears at 51 to 61 (PNVTGNLHLGH). The 'KMSKS' region motif lies at 523 to 527 (KMSKS). ATP is bound at residue K526. The stretch at 797 to 869 (EDLLGSNNEA…ELEKLLSSHK (73 aa)) forms a coiled coil.

The protein belongs to the class-I aminoacyl-tRNA synthetase family. ValS type 1 subfamily. As to quaternary structure, monomer.

It localises to the cytoplasm. The catalysed reaction is tRNA(Val) + L-valine + ATP = L-valyl-tRNA(Val) + AMP + diphosphate. Its function is as follows. Catalyzes the attachment of valine to tRNA(Val). As ValRS can inadvertently accommodate and process structurally similar amino acids such as threonine, to avoid such errors, it has a 'posttransfer' editing activity that hydrolyzes mischarged Thr-tRNA(Val) in a tRNA-dependent manner. The polypeptide is Valine--tRNA ligase (Malacoplasma penetrans (strain HF-2) (Mycoplasma penetrans)).